The chain runs to 185 residues: Ribosome-recycling factor (185 aa).

The protein belongs to the RRF family.

It is found in the cytoplasm. Responsible for the release of ribosomes from messenger RNA at the termination of protein biosynthesis. May increase the efficiency of translation by recycling ribosomes from one round of translation to another. This chain is Ribosome-recycling factor, found in Clostridium botulinum (strain Eklund 17B / Type B).